The chain runs to 348 residues: Tetraacyldisaccharide 4'-kinase (348 aa).

Residue T50–T57 participates in ATP binding.

The protein belongs to the LpxK family.

The enzyme catalyses a lipid A disaccharide + ATP = a lipid IVA + ADP + H(+). It participates in glycolipid biosynthesis; lipid IV(A) biosynthesis; lipid IV(A) from (3R)-3-hydroxytetradecanoyl-[acyl-carrier-protein] and UDP-N-acetyl-alpha-D-glucosamine: step 6/6. Its function is as follows. Transfers the gamma-phosphate of ATP to the 4'-position of a tetraacyldisaccharide 1-phosphate intermediate (termed DS-1-P) to form tetraacyldisaccharide 1,4'-bis-phosphate (lipid IVA). This Desulfotalea psychrophila (strain LSv54 / DSM 12343) protein is Tetraacyldisaccharide 4'-kinase.